We begin with the raw amino-acid sequence, 189 residues long: dCTP deaminase (189 aa).

DCTP-binding positions include 112–117, 136–138, glutamine 157, tyrosine 171, and glutamine 181; these read KSTYAR and TLE. Glutamate 138 acts as the Proton donor/acceptor in catalysis.

The protein belongs to the dCTP deaminase family. As to quaternary structure, homotrimer.

The enzyme catalyses dCTP + H2O + H(+) = dUTP + NH4(+). It participates in pyrimidine metabolism; dUMP biosynthesis; dUMP from dCTP (dUTP route): step 1/2. Its function is as follows. Catalyzes the deamination of dCTP to dUTP. The protein is dCTP deaminase of Paraburkholderia phymatum (strain DSM 17167 / CIP 108236 / LMG 21445 / STM815) (Burkholderia phymatum).